The sequence spans 948 residues: Non-lysosomal glucosylceramidase (948 aa).

Topologically, residues 1 to 736 (MAEPLAVETK…VMDGPSAYCS (736 aa)) are extracellular. Basic and acidic residues predominate over residues 177–195 (STRDKTSDPDGDPDGERTK). The interval 177 to 197 (STRDKTSDPDGDPDGERTKCQ) is disordered. N-linked (GlcNAc...) asparagine glycosylation occurs at asparagine 200. A Phosphoserine modification is found at serine 214. Asparagine 288, asparagine 555, and asparagine 629 each carry an N-linked (GlcNAc...) asparagine glycan. A phosphoserine mark is found at serine 667 and serine 669. A glycan (N-linked (GlcNAc...) asparagine) is linked at asparagine 673. A helical membrane pass occupies residues 737-753 (GLWLAALQAMSAMATIL). Residues 754–948 (DQPNDCLRYQ…ALERRRAQRD (195 aa)) lie on the Cytoplasmic side of the membrane.

This sequence belongs to the non-lysosomal glucosylceramidase family.

It localises to the cell membrane. It catalyses the reaction a beta-D-glucosyl-(1&lt;-&gt;1')-N-acylsphing-4-enine + H2O = an N-acylsphing-4-enine + D-glucose. Functionally, non-lysosomal glucosylceramidase that catalyzes the conversion of glucosylceramide to free glucose and ceramide. The protein is Non-lysosomal glucosylceramidase of Drosophila melanogaster (Fruit fly).